Reading from the N-terminus, the 445-residue chain is Homogentisate 1,2-dioxygenase (445 aa).

K98 carries the N6-acetyllysine modification. 3 residues coordinate Fe cation: H335, E341, and H371. K414 carries the N6-succinyllysine modification.

Belongs to the homogentisate dioxygenase family. In terms of assembly, homohexamer arranged as a dimer of trimers. It depends on Fe cation as a cofactor.

The catalysed reaction is homogentisate + O2 = 4-maleylacetoacetate + H(+). Its pathway is amino-acid degradation; L-phenylalanine degradation; acetoacetate and fumarate from L-phenylalanine: step 4/6. In terms of biological role, catalyzes the conversion of homogentisate to maleylacetoacetate. The chain is Homogentisate 1,2-dioxygenase (Hgd) from Mus musculus (Mouse).